Consider the following 108-residue polypeptide: Nucleoid-associated protein BPP1222 (108 aa).

The interval 86-108 is disordered; that stretch reads TSQEKMASVTAGMPLPPGMKLPF. The segment covering 99–108 has biased composition (pro residues); sequence PLPPGMKLPF.

This sequence belongs to the YbaB/EbfC family. As to quaternary structure, homodimer.

It is found in the cytoplasm. Its subcellular location is the nucleoid. Binds to DNA and alters its conformation. May be involved in regulation of gene expression, nucleoid organization and DNA protection. In Bordetella parapertussis (strain 12822 / ATCC BAA-587 / NCTC 13253), this protein is Nucleoid-associated protein BPP1222.